Consider the following 226-residue polypeptide: Protein DEHYDRATION-INDUCED 19 (226 aa).

A disordered region spans residues Phe158–Ala208. The span at Leu196–Arg205 shows a compositional bias: basic and acidic residues.

The protein belongs to the Di19 family.

The protein is Protein DEHYDRATION-INDUCED 19 (DI19-1) of Oryza sativa subsp. japonica (Rice).